We begin with the raw amino-acid sequence, 154 residues long: NADPH-dependent 7-cyano-7-deazaguanine reductase (154 aa).

C52 (thioimide intermediate) is an active-site residue. D59 serves as the catalytic Proton donor. Substrate is bound by residues 74–76 (VES) and 93–94 (HE).

Belongs to the GTP cyclohydrolase I family. QueF type 1 subfamily.

It localises to the cytoplasm. The catalysed reaction is 7-aminomethyl-7-carbaguanine + 2 NADP(+) = 7-cyano-7-deazaguanine + 2 NADPH + 3 H(+). It participates in tRNA modification; tRNA-queuosine biosynthesis. Functionally, catalyzes the NADPH-dependent reduction of 7-cyano-7-deazaguanine (preQ0) to 7-aminomethyl-7-deazaguanine (preQ1). This chain is NADPH-dependent 7-cyano-7-deazaguanine reductase, found in Paracoccus denitrificans (strain Pd 1222).